We begin with the raw amino-acid sequence, 287 residues long: N-acetylmannosamine kinase (287 aa).

ATP contacts are provided by residues 5–12 (AIDIGGTK) and 131–138 (GVGGGIII). Residues H155, C165, C167, and C172 each contribute to the Zn(2+) site.

It belongs to the ROK (NagC/XylR) family. NanK subfamily. As to quaternary structure, homodimer.

The catalysed reaction is an N-acyl-D-mannosamine + ATP = an N-acyl-D-mannosamine 6-phosphate + ADP + H(+). It participates in amino-sugar metabolism; N-acetylneuraminate degradation; D-fructose 6-phosphate from N-acetylneuraminate: step 2/5. Its function is as follows. Catalyzes the phosphorylation of N-acetylmannosamine (ManNAc) to ManNAc-6-P. The sequence is that of N-acetylmannosamine kinase from Vibrio cholerae serotype O1 (strain ATCC 39541 / Classical Ogawa 395 / O395).